A 155-amino-acid polypeptide reads, in one-letter code: Endoribonuclease YbeY (155 aa).

Zn(2+) is bound by residues H114, H118, and H124.

The protein belongs to the endoribonuclease YbeY family. The cofactor is Zn(2+).

The protein resides in the cytoplasm. Its function is as follows. Single strand-specific metallo-endoribonuclease involved in late-stage 70S ribosome quality control and in maturation of the 3' terminus of the 16S rRNA. This Tolumonas auensis (strain DSM 9187 / NBRC 110442 / TA 4) protein is Endoribonuclease YbeY.